The sequence spans 314 residues: Curved DNA-binding protein (314 aa).

A J domain is found at 5-69 (DYYKILDVEP…EKRAEYDELR (65 aa)). The tract at residues 73 to 92 (RQGRPFQTPPGWQSRAGAGA) is disordered.

Its subcellular location is the cytoplasm. The protein resides in the nucleoid. Its function is as follows. DNA-binding protein that preferentially recognizes a curved DNA sequence. It is probably a functional analog of DnaJ; displays overlapping activities with DnaJ, but functions under different conditions, probably acting as a molecular chaperone in an adaptive response to environmental stresses other than heat shock. Lacks autonomous chaperone activity; binds native substrates and targets them for recognition by DnaK. Its activity is inhibited by the binding of CbpM. The sequence is that of Curved DNA-binding protein from Pseudomonas syringae pv. tomato (strain ATCC BAA-871 / DC3000).